The following is a 378-amino-acid chain: Histidinol-phosphate aminotransferase 2 (378 aa).

Residue K240 is modified to N6-(pyridoxal phosphate)lysine.

Belongs to the class-II pyridoxal-phosphate-dependent aminotransferase family. Histidinol-phosphate aminotransferase subfamily. In terms of assembly, homodimer. Requires pyridoxal 5'-phosphate as cofactor.

The enzyme catalyses L-histidinol phosphate + 2-oxoglutarate = 3-(imidazol-4-yl)-2-oxopropyl phosphate + L-glutamate. It functions in the pathway amino-acid biosynthesis; L-histidine biosynthesis; L-histidine from 5-phospho-alpha-D-ribose 1-diphosphate: step 7/9. In Caulobacter vibrioides (strain ATCC 19089 / CIP 103742 / CB 15) (Caulobacter crescentus), this protein is Histidinol-phosphate aminotransferase 2 (hisC2).